The following is a 377-amino-acid chain: Putative glutamate--cysteine ligase 2 (377 aa).

The protein belongs to the glutamate--cysteine ligase type 2 family. YbdK subfamily.

The enzyme catalyses L-cysteine + L-glutamate + ATP = gamma-L-glutamyl-L-cysteine + ADP + phosphate + H(+). Its function is as follows. ATP-dependent carboxylate-amine ligase which exhibits weak glutamate--cysteine ligase activity. This is Putative glutamate--cysteine ligase 2 from Ralstonia pickettii (strain 12J).